The chain runs to 114 residues: Immunomodulatory protein FIP-Fve (114 aa).

Position 1 is an N-acetylserine (serine 1).

The protein belongs to the fungal immunomodulatory protein (FIP) family. As to quaternary structure, homodimer.

Its function is as follows. Lectin with specificity for complex cell-surface carbohydrates. Possesses immunomodulatory activity, stimulates lymphocyte mitogenesis, suppresses systemic anaphylaxis reactions and edema, enhances transcription of IL-2, IFN-gamma and TNF-alpha and hemagglutinates red blood cells. The chain is Immunomodulatory protein FIP-Fve from Flammulina velutipes (Agaricus velutipes).